Reading from the N-terminus, the 60-residue chain is Metallothionein A (60 aa).

The beta stretch occupies residues 1-28 (MDPCDCSKSGTCNCGGSCTCTNCSCKSC). 20 residues coordinate a divalent metal cation: cysteine 4, cysteine 6, cysteine 12, cysteine 14, cysteine 18, cysteine 20, cysteine 23, cysteine 25, cysteine 28, cysteine 32, cysteine 33, cysteine 35, cysteine 36, cysteine 40, cysteine 43, cysteine 47, cysteine 49, cysteine 54, cysteine 58, and cysteine 59. Residues 29–60 (KKSCCPCCPSGCTKCASGCVCKGKTCDTSCCQ) form an alpha region.

This sequence belongs to the metallothionein superfamily. Type 1 family.

Its function is as follows. Metallothioneins have a high content of cysteine residues that bind various heavy metals. The polypeptide is Metallothionein A (mta) (Chionodraco hamatus (Antarctic teleost icefish)).